Here is a 185-residue protein sequence, read N- to C-terminus: Ribosome maturation factor RimM (185 aa).

The 80-residue stretch at 105-184 (KDEYYWKDII…IVVVDWEIYK (80 aa)) folds into the PRC barrel domain.

Belongs to the RimM family. As to quaternary structure, binds ribosomal protein uS19.

The protein resides in the cytoplasm. Its function is as follows. An accessory protein needed during the final step in the assembly of 30S ribosomal subunit, possibly for assembly of the head region. Essential for efficient processing of 16S rRNA. May be needed both before and after RbfA during the maturation of 16S rRNA. It has affinity for free ribosomal 30S subunits but not for 70S ribosomes. This Blochmanniella floridana protein is Ribosome maturation factor RimM.